The following is a 237-amino-acid chain: 2-C-methyl-D-erythritol 4-phosphate cytidylyltransferase (237 aa).

This sequence belongs to the IspD/TarI cytidylyltransferase family. IspD subfamily.

It catalyses the reaction 2-C-methyl-D-erythritol 4-phosphate + CTP + H(+) = 4-CDP-2-C-methyl-D-erythritol + diphosphate. It participates in isoprenoid biosynthesis; isopentenyl diphosphate biosynthesis via DXP pathway; isopentenyl diphosphate from 1-deoxy-D-xylulose 5-phosphate: step 2/6. Functionally, catalyzes the formation of 4-diphosphocytidyl-2-C-methyl-D-erythritol from CTP and 2-C-methyl-D-erythritol 4-phosphate (MEP). The polypeptide is 2-C-methyl-D-erythritol 4-phosphate cytidylyltransferase (Paraburkholderia xenovorans (strain LB400)).